We begin with the raw amino-acid sequence, 199 residues long: Probable V-type proton ATPase 20 kDa proteolipid subunit (199 aa).

The Vacuolar portion of the chain corresponds to 1-3 (MSL). A helical membrane pass occupies residues 4 to 24 (FSTSLWTTTVMSIIVGLYMLF). Topologically, residues 25–46 (HNSGESFDFGSFLLDTSPYTWG) are cytoplasmic. A helical transmembrane segment spans residues 47–67 (LLGIASCVAFGIIGAAWGIFI). Residues 68-86 (CGTSILGGAVKAPRIKTKN) are Vacuolar-facing. A helical transmembrane segment spans residues 87–107 (LISIIFCEVVAIYSLIIAIVF). At 108 to 130 (SAKINDINPAGFYTKSHYYTGFA) the chain is on the cytoplasmic side. Residues 131–151 (LFWGGITVGLCNLICGVCVGI) form a helical membrane-spanning segment. Over 152–170 (TGSSAALADAQDASLFVKV) the chain is Vacuolar. A helical membrane pass occupies residues 171–191 (LVVEIFGSVLGLFGLIVGLLI). Residues 192-199 (GGKASDFS) are Cytoplasmic-facing.

This sequence belongs to the V-ATPase proteolipid subunit family. In terms of assembly, V-ATPase is a heteromultimeric enzyme composed of a peripheral catalytic V1 complex (components A to H) attached to an integral membrane V0 proton pore complex (components: a, c, c', c'', d, e, f and VOA1). The decameric c-ring forms the proton-conducting pore, and is composed of eight proteolipid subunits c, one subunit c' and one subunit c''.

It is found in the vacuole membrane. Its function is as follows. Proton-conducting pore forming subunit of the V0 complex of vacuolar(H+)-ATPase (V-ATPase), a multisubunit enzyme composed of a peripheral complex (V1) that hydrolyzes ATP and a membrane integral complex (V0) that translocates protons. V-ATPase is responsible for acidifying and maintaining the pH of intracellular compartments. The chain is Probable V-type proton ATPase 20 kDa proteolipid subunit (vma16) from Schizosaccharomyces pombe (strain 972 / ATCC 24843) (Fission yeast).